A 662-amino-acid polypeptide reads, in one-letter code: MNNFSIISGYKPAGDQPKAIDEIITGLNSKKRSQMLLGITGSGKTFTMANIIERTNRPTLIMAHNKTLAAQIYLEMKSIFPKNAVEYFVSYYDYYQPESYIVRTDTFIEKDSSINEQIDLMRHSATRSLLERRDVIVISSVSCIYGLGAPDLYYQMTVHLEPGQNYPRDKLLNDLINLQYKRNDIGFERGCFRVKGDNMDIFPSHYSDKAWRLSFFGDELEYIHEFDPLTGEKLTQLDKAMIFGNSHFVMPRERINHAISSIEVELQKRLEFLKSQDKLIEAKRLNQRTLYDLEMLTETGSCKGIENYSRFFTGRNAGQPPPTLFEYLPEDALLFIDESHVSVPQIRAMYNSDRARKEVLVEHGFRLPSALDNRPLKFEEWEKFRPQTVFVSATPGQFELEETGGTVVELIIRPTGLLDPECIIKPATNQVEDLISEIQTTINTGLRILVTTLTKKMAEDLTSYLQDLQYKTYYLHSNIHTLERIEILRNLRQGTIDILVGINLLREGIDIPECGLVAILDADKEGFLRSETSLIQTIGRAARNSRGKVILYADKMTKSIDKAVSETLRRRQIQQEYNKKHGIIPKTINRAIHALESLEEIHDNKLDKKQANALLNNPAKLKAHMDKLKKEMFKAASNLEFEQAAKLRNQLKALEEAALKLS.

The region spanning 25-414 is the Helicase ATP-binding domain; the sequence is TGLNSKKRSQ…GTVVELIIRP (390 aa). Residue 38 to 45 coordinates ATP; sequence GITGSGKT. A Beta-hairpin motif is present at residues 91-114; that stretch reads YYDYYQPESYIVRTDTFIEKDSSI. Residues 430 to 592 enclose the Helicase C-terminal domain; it reads QVEDLISEIQ…IIPKTINRAI (163 aa). A UVR domain is found at 622-657; the sequence is KAHMDKLKKEMFKAASNLEFEQAAKLRNQLKALEEA.

Belongs to the UvrB family. Forms a heterotetramer with UvrA during the search for lesions. Interacts with UvrC in an incision complex.

It localises to the cytoplasm. Its function is as follows. The UvrABC repair system catalyzes the recognition and processing of DNA lesions. A damage recognition complex composed of 2 UvrA and 2 UvrB subunits scans DNA for abnormalities. Upon binding of the UvrA(2)B(2) complex to a putative damaged site, the DNA wraps around one UvrB monomer. DNA wrap is dependent on ATP binding by UvrB and probably causes local melting of the DNA helix, facilitating insertion of UvrB beta-hairpin between the DNA strands. Then UvrB probes one DNA strand for the presence of a lesion. If a lesion is found the UvrA subunits dissociate and the UvrB-DNA preincision complex is formed. This complex is subsequently bound by UvrC and the second UvrB is released. If no lesion is found, the DNA wraps around the other UvrB subunit that will check the other stand for damage. The sequence is that of UvrABC system protein B from Rickettsia prowazekii (strain Madrid E).